Consider the following 324-residue polypeptide: Fibronectin type III domain-containing protein 8 (324 aa).

Residues 179 to 280 enclose the Fibronectin type-III domain; sequence PDTPFIFEHT…KPYKFATLAT (102 aa).

In Homo sapiens (Human), this protein is Fibronectin type III domain-containing protein 8 (FNDC8).